We begin with the raw amino-acid sequence, 104 residues long: MQRLCVCVLILALALTAFSEASWKPRSQLQDAPSGPGANGGLEPHWLNRLGPASHHRWQLGLQGPPQQVADLSKKQGPWLEEEEAAYGWMDFGRRSAEDGDQHP.

The N-terminal stretch at 1–21 (MQRLCVCVLILALALTAFSEA) is a signal peptide. Residues 22 to 49 (SWKPRSQLQDAPSGPGANGGLEPHWLNR) are disordered. The propeptide occupies 22–58 (SWKPRSQLQDAPSGPGANGGLEPHWLNRLGPASHHRW). Residues Gln59 and Gln76 each carry the pyrrolidone carboxylic acid modification. Tyr87 carries the post-translational modification Sulfotyrosine. Position 92 is a phenylalanine amide (Phe92). Phosphoserine is present on Ser96. Positions 96 to 104 (SAEDGDQHP) are excised as a propeptide.

The protein belongs to the gastrin/cholecystokinin family.

Its subcellular location is the secreted. In terms of biological role, gastrin stimulates the stomach mucosa to produce and secrete hydrochloric acid and the pancreas to secrete its digestive enzymes. It also stimulates smooth muscle contraction and increases blood circulation and water secretion in the stomach and intestine. The sequence is that of Gastrin (GAST) from Felis catus (Cat).